A 262-amino-acid polypeptide reads, in one-letter code: 5'-nucleotidase SurE (262 aa).

A divalent metal cation is bound by residues Asp-11, Asp-12, Ser-43, and Asn-101.

The protein belongs to the SurE nucleotidase family. It depends on a divalent metal cation as a cofactor.

It is found in the cytoplasm. It catalyses the reaction a ribonucleoside 5'-phosphate + H2O = a ribonucleoside + phosphate. Functionally, nucleotidase that shows phosphatase activity on nucleoside 5'-monophosphates. The protein is 5'-nucleotidase SurE of Prochlorococcus marinus (strain NATL2A).